A 180-amino-acid polypeptide reads, in one-letter code: Protein SPO16 homolog (180 aa).

As to quaternary structure, homooligomer. Interacts with SHOC, SYCP1 and SYCE3.

The protein localises to the chromosome. Functionally, plays a key role in reinforcing the integrity of the central element of the synaptonemal complex (SC) thereby stabilizing SC, ensuring progression of meiotic prophase I in male and female germ cells. Promotes homologous recombination and crossing-over in meiotic prophase I via its association with SHOC1. Required for the localization of TEX11 and MSH4 to recombination intermediates. This is Protein SPO16 homolog from Homo sapiens (Human).